Here is a 207-residue protein sequence, read N- to C-terminus: Strobilurin A biosynthesis cluster protein r1 (207 aa).

The next 2 helical transmembrane spans lie at 108–128 (FIFP…LLYL) and 169–189 (NLTT…PFWI).

It is found in the membrane. It participates in mycotoxin biosynthesis. Its function is as follows. Part of the gene cluster that mediates the biosynthesis of strobilurin A, an antifungal polyketide that contains a key beta-methoxyacrylate toxophore that targets the complex III of the mitochondrial electron transport chain. Strobilurin biosynthesis begins with construction of benzoyl CoA by step-wise elimination of ammonia from phenylalanine by the phenylalanine ammonia-lyase str11, oxygenation by str8 and retro-Claisen reaction to form benzoic acid, which is activated to its CoA thiolester benzoyl CoA by the dedicated CoA ligase str10. Benzoyl CoA forms the starter unit for the highly reducing polyketide synthase stpks1 that produces the polyketide prestrobilutin A. The FAD-dependent oxygenase str9 then catalyzes the key oxidative rearrangement responsible for the creation of the beta-methoxyacrylate toxophore. Str9 performs epoxidation of the 2,3 olefin of prestrobilutin A, followed by Meinwald rearrangement to furnish the aldehyde intermediate. Rapid enolization of the aldehyde intermediate would give the beta-methoxyacrylate skeleton and methylations catalyzed by str2 and str3 complete the synthesis and lead to the production of strobilurin A. The short-chain dehydrogenase stl2 and the dehydrogenase str4 play a role in the shunt pathway leading to the production of bolineol. The cluster encodes no obvious halogenase gene that could be involved in production of strobilurin B, nor any obvious dimethylallyl-transferase that could be involved in the production of strobilurin G. It is possible that unknown proteins encoded in, or near, the cluster (such as str1 or stl1) may form new classes of halogenases or dimethylally-transferases, or that the responsible genes are located elsewhere on the genome. Similarly, proteins encoded by str5/str6 hydrolases appear to have no chemical role in the biosynthesis of strobilurin A. Finally, no obvious self-resistance gene is found within the cluster. This Strobilurus tenacellus protein is Strobilurin A biosynthesis cluster protein r1.